A 429-amino-acid chain; its full sequence is Phosphoribosylamine--glycine ligase (429 aa).

One can recognise an ATP-grasp domain in the interval 109 to 316; that stretch reads KDFLARHQIP…LVDLCLAACD (208 aa). 135–196 is an ATP binding site; the sequence is LREKGAPIVI…EEFLDGEEAS (62 aa). The Mg(2+) site is built by E286 and N288.

The protein belongs to the GARS family. As to quaternary structure, monomer. Mg(2+) is required as a cofactor. It depends on Mn(2+) as a cofactor.

The catalysed reaction is 5-phospho-beta-D-ribosylamine + glycine + ATP = N(1)-(5-phospho-beta-D-ribosyl)glycinamide + ADP + phosphate + H(+). It participates in purine metabolism; IMP biosynthesis via de novo pathway; N(1)-(5-phospho-D-ribosyl)glycinamide from 5-phospho-alpha-D-ribose 1-diphosphate: step 2/2. The protein is Phosphoribosylamine--glycine ligase of Salmonella typhimurium (strain LT2 / SGSC1412 / ATCC 700720).